Consider the following 125-residue polypeptide: Large ribosomal subunit protein bL12 (125 aa).

The protein belongs to the bacterial ribosomal protein bL12 family. Homodimer. Part of the ribosomal stalk of the 50S ribosomal subunit. Forms a multimeric L10(L12)X complex, where L10 forms an elongated spine to which 2 to 4 L12 dimers bind in a sequential fashion. Binds GTP-bound translation factors.

Forms part of the ribosomal stalk which helps the ribosome interact with GTP-bound translation factors. Is thus essential for accurate translation. The sequence is that of Large ribosomal subunit protein bL12 from Ruthia magnifica subsp. Calyptogena magnifica.